A 334-amino-acid polypeptide reads, in one-letter code: 6-phosphogluconolactonase (334 aa).

It belongs to the cycloisomerase 2 family.

The catalysed reaction is 6-phospho-D-glucono-1,5-lactone + H2O = 6-phospho-D-gluconate + H(+). Its pathway is carbohydrate degradation; pentose phosphate pathway; D-ribulose 5-phosphate from D-glucose 6-phosphate (oxidative stage): step 2/3. In terms of biological role, catalyzes the hydrolysis of 6-phosphogluconolactone to 6-phosphogluconate. This Yersinia pseudotuberculosis serotype IB (strain PB1/+) protein is 6-phosphogluconolactonase.